Reading from the N-terminus, the 190-residue chain is ATP synthase subunit b (190 aa).

Residues 24–44 (IVGSLICFVVILFFFWKLVLP) traverse the membrane as a helical segment.

This sequence belongs to the ATPase B chain family. F-type ATPases have 2 components, F(1) - the catalytic core - and F(0) - the membrane proton channel. F(1) has five subunits: alpha(3), beta(3), gamma(1), delta(1), epsilon(1). F(0) has three main subunits: a(1), b(2) and c(10-14). The alpha and beta chains form an alternating ring which encloses part of the gamma chain. F(1) is attached to F(0) by a central stalk formed by the gamma and epsilon chains, while a peripheral stalk is formed by the delta and b chains.

It is found in the cell membrane. Functionally, f(1)F(0) ATP synthase produces ATP from ADP in the presence of a proton or sodium gradient. F-type ATPases consist of two structural domains, F(1) containing the extramembraneous catalytic core and F(0) containing the membrane proton channel, linked together by a central stalk and a peripheral stalk. During catalysis, ATP synthesis in the catalytic domain of F(1) is coupled via a rotary mechanism of the central stalk subunits to proton translocation. Component of the F(0) channel, it forms part of the peripheral stalk, linking F(1) to F(0). This is ATP synthase subunit b from Leifsonia xyli subsp. xyli (strain CTCB07).